The chain runs to 84 residues: UPF0473 protein CPF_2030 (84 aa).

Belongs to the UPF0473 family.

The protein is UPF0473 protein CPF_2030 of Clostridium perfringens (strain ATCC 13124 / DSM 756 / JCM 1290 / NCIMB 6125 / NCTC 8237 / Type A).